Consider the following 510-residue polypeptide: Putative serine protease K12H4.7 (510 aa).

A signal peptide spans 1 to 19 (MKTLLAVLLAACVLTQVLS). Ser-187 acts as the Charge relay system in catalysis. Residue Asn-234 is glycosylated (N-linked (GlcNAc...) asparagine). The Charge relay system role is filled by Asp-452. An N-linked (GlcNAc...) asparagine glycan is attached at Asn-473. His-477 serves as the catalytic Charge relay system.

It belongs to the peptidase S28 family.

The sequence is that of Putative serine protease K12H4.7 from Caenorhabditis elegans.